The primary structure comprises 431 residues: MPVLTRSAELFEKAKKFIPGGVNSPVRAFKSVGGTPIYMAKGQGAYMTDVDGNTYLDYVGSWGPFILGSMHPRVTAAIEYTLRNIGTSFGTPIELEIEIAELLCKIVPSLEMVRMVNSGTEATMSAVRLARGYTGKDKIIKFEGCYHGHGDSFLIKAGSGVLTLGDPDSPGVTKGTANDTLNATYNDIESVKAIVNENKGQVAAIIIEPVAGNTGVIPAKKEFLVALRELCDAEGIVLIFDEVMCGFRVALGGAQELYGVTPDLTTMGKIIGGGLPVGAFGGKRHIMENIAPLGSVYQAGTLSGNPLALTAGLETLKILMEENPYPELERKAAFLEAGFKANMEKLGLNYTQNRVGSMACLFFTETPVVDYKSAITADTAKYGKYFHSMLDQGIYLAPSQFEAMFTSFAHTDEDLEKTVKANYNALVAATK.

K269 is modified (N6-(pyridoxal phosphate)lysine).

It belongs to the class-III pyridoxal-phosphate-dependent aminotransferase family. HemL subfamily. As to quaternary structure, homodimer. Requires pyridoxal 5'-phosphate as cofactor.

It is found in the cytoplasm. It carries out the reaction (S)-4-amino-5-oxopentanoate = 5-aminolevulinate. It participates in porphyrin-containing compound metabolism; protoporphyrin-IX biosynthesis; 5-aminolevulinate from L-glutamyl-tRNA(Glu): step 2/2. It functions in the pathway porphyrin-containing compound metabolism; chlorophyll biosynthesis. This is Glutamate-1-semialdehyde 2,1-aminomutase from Chlorobaculum tepidum (strain ATCC 49652 / DSM 12025 / NBRC 103806 / TLS) (Chlorobium tepidum).